Consider the following 565-residue polypeptide: NAD-dependent malic enzyme (565 aa).

The Proton donor role is filled by Y104. Residue R157 participates in NAD(+) binding. K175 functions as the Proton acceptor in the catalytic mechanism. Positions 246, 247, and 270 each coordinate a divalent metal cation. D270 and N418 together coordinate NAD(+).

It belongs to the malic enzymes family. Homotetramer. The cofactor is Mg(2+). Requires Mn(2+) as cofactor.

It catalyses the reaction (S)-malate + NAD(+) = pyruvate + CO2 + NADH. The enzyme catalyses oxaloacetate + H(+) = pyruvate + CO2. The polypeptide is NAD-dependent malic enzyme (Klebsiella pneumoniae (strain 342)).